The chain runs to 205 residues: Urease accessory protein UreE (205 aa).

Residues 170-192 (EHHGHSHSHSHDHDHDHDHDHQH) show a composition bias toward basic and acidic residues. Positions 170-205 (EHHGHSHSHSHDHDHDHDHDHQHGPCCSHGHHHGHR) are disordered.

It belongs to the UreE family.

It localises to the cytoplasm. In terms of biological role, involved in urease metallocenter assembly. Binds nickel. Probably functions as a nickel donor during metallocenter assembly. The protein is Urease accessory protein UreE of Burkholderia pseudomallei (strain 668).